The following is a 641-amino-acid chain: MSYVQSIPPHDIEAHLAEHDNKSILRFITCGSVDDGKSTLIGRLLYDAKLVFEDQLANLGRVGSPGAANGKEIDLALLLDGLEAEREQGITIDVAYRYFATSKRKFIVADTPGHEEYTRNMVTGASTADLAIILIDSRQGILQQTRRHSYIASLLGIRHVVLAVNKIDLVDFKQQVYEEIVADYMAFAKELGFASIRPIPISARDGDNVISASANTPWYRGAALLEYLETVELDPTDQAKPFRFPVQMVMRPNADFRGYAGQISCGRISVGDPVVVAKTGQRTSVKAIVTYDGELATAGEGEAVTLVLSDEVDASRGNMLVAPGARPFVADQFQAHVIWFDANPMMPGRSYILRTETDSVSATVTTLKHQVNINSFIREAAKSLQMNEVGVCNISTQAPIAFDAYNDNRATGNFIIVDRVTNATVGAGLIDFPLRRADNVHWHALEVNKSARSAMKNQLPAVLWFTGLSGSGKSTIANELDRILHAQGKHTYLLDGDNVRHGLNRDLGFTEEDRVENIRRVAEVAKLMADAGLIVLVSFISPFRDERRMARELMEEGEFIEIFVDTPLDECARRDPKGLYEKALAGKIANFTGVSSCYEAPENPELHIRTVGHQPNDLALAIEEFLDRRIGGQMTPLQRPT.

The segment at 1 to 458 is sulfate adenylyltransferase; the sequence is MSYVQSIPPH…KSARSAMKNQ (458 aa). In terms of domain architecture, tr-type G spans 22–236; the sequence is KSILRFITCG…YLETVELDPT (215 aa). The interval 31–38 is G1; it reads GSVDDGKS. 31–38 is a binding site for GTP; the sequence is GSVDDGKS. The tract at residues 89–93 is G2; the sequence is GITID. The interval 110–113 is G3; it reads DTPG. Residues 110 to 114 and 165 to 168 each bind GTP; these read DTPGH and NKID. Residues 165–168 form a G4 region; the sequence is NKID. The interval 202-204 is G5; sequence SAR. The segment at 459 to 641 is adenylyl-sulfate kinase; that stretch reads LPAVLWFTGL…GQMTPLQRPT (183 aa). Position 467 to 474 (467 to 474) interacts with ATP; the sequence is GLSGSGKS. Ser-541 (phosphoserine intermediate) is an active-site residue.

In the C-terminal section; belongs to the APS kinase family. This sequence in the N-terminal section; belongs to the TRAFAC class translation factor GTPase superfamily. Classic translation factor GTPase family. CysN/NodQ subfamily. As to quaternary structure, sulfate-activating enzymes, NodP and NodQ, may be physically associated.

The enzyme catalyses sulfate + ATP + H(+) = adenosine 5'-phosphosulfate + diphosphate. It catalyses the reaction adenosine 5'-phosphosulfate + ATP = 3'-phosphoadenylyl sulfate + ADP + H(+). In terms of biological role, proposed to provide activated sulfate for transfer to Nod factor. ATP sulfurylase may be the GTPase, regulating ATP sulfurylase activity. APS kinase catalyzes the synthesis of activated sulfate. This chain is Bifunctional enzyme NodQ (nodQ), found in Rhizobium meliloti (strain 1021) (Ensifer meliloti).